The primary structure comprises 72 residues: KFIRHKDESFYECGQLIGYQQYCVNACQAHGSKEKGYCKGMAPFGLPGGCYCPKLPSNRVKMCFGALESKCA.

The LCN-type CS-alpha/beta domain occupies 1 to 72 (KFIRHKDESF…CFGALESKCA (72 aa)). Intrachain disulfides connect C13–C38, C23–C50, C27–C52, and C63–C71.

The protein belongs to the long (4 C-C) scorpion toxin superfamily. Sodium channel inhibitor family. In terms of tissue distribution, expressed by the venom gland.

Its subcellular location is the secreted. In terms of biological role, sodium channel (Nav) specific neurotoxin. This is Phaiodotoxin-2 from Anuroctonus phaiodactylus (Mafia scorpion).